A 482-amino-acid chain; its full sequence is ATP synthase subunit beta (482 aa).

161–168 (GGAGVGKT) serves as a coordination point for ATP.

This sequence belongs to the ATPase alpha/beta chains family. As to quaternary structure, F-type ATPases have 2 components, CF(1) - the catalytic core - and CF(0) - the membrane proton channel. CF(1) has five subunits: alpha(3), beta(3), gamma(1), delta(1), epsilon(1). CF(0) has three main subunits: a(1), b(2) and c(9-12). The alpha and beta chains form an alternating ring which encloses part of the gamma chain. CF(1) is attached to CF(0) by a central stalk formed by the gamma and epsilon chains, while a peripheral stalk is formed by the delta and b chains.

The protein localises to the cell inner membrane. It carries out the reaction ATP + H2O + 4 H(+)(in) = ADP + phosphate + 5 H(+)(out). In terms of biological role, produces ATP from ADP in the presence of a proton gradient across the membrane. The catalytic sites are hosted primarily by the beta subunits. The chain is ATP synthase subunit beta from Solibacter usitatus (strain Ellin6076).